The following is a 100-amino-acid chain: NADH-quinone oxidoreductase subunit K (100 aa).

3 helical membrane-spanning segments follow: residues 2–22 (ITLSHYLVVAALMFVLGLIGI), 29–49 (IMLFFSSEILLNAANVALAAI), and 63–83 (LFIVAVAASEVAVGLGLLILW).

This sequence belongs to the complex I subunit 4L family. In terms of assembly, NDH-1 is composed of 14 different subunits. Subunits NuoA, H, J, K, L, M, N constitute the membrane sector of the complex.

It localises to the cell inner membrane. The catalysed reaction is a quinone + NADH + 5 H(+)(in) = a quinol + NAD(+) + 4 H(+)(out). NDH-1 shuttles electrons from NADH, via FMN and iron-sulfur (Fe-S) centers, to quinones in the respiratory chain. The immediate electron acceptor for the enzyme in this species is believed to be ubiquinone. Couples the redox reaction to proton translocation (for every two electrons transferred, four hydrogen ions are translocated across the cytoplasmic membrane), and thus conserves the redox energy in a proton gradient. This chain is NADH-quinone oxidoreductase subunit K, found in Campylobacter curvus (strain 525.92).